Consider the following 391-residue polypeptide: Isocitrate dehydrogenase [NADP] (391 aa).

5 residues coordinate D-threo-isocitrate: Ser-102, Asn-104, Arg-108, Arg-118, and Arg-142. Asp-283 contacts Mg(2+).

The protein belongs to the isocitrate and isopropylmalate dehydrogenases family. As to quaternary structure, homodimer. Requires Mg(2+) as cofactor. Mn(2+) is required as a cofactor.

It carries out the reaction D-threo-isocitrate + NADP(+) = 2-oxoglutarate + CO2 + NADPH. Catalyzes the oxidative decarboxylation of isocitrate to 2-oxoglutarate and carbon dioxide with the concomitant reduction of NADP(+). The protein is Isocitrate dehydrogenase [NADP] (icd) of Streptococcus salivarius.